The following is a 440-amino-acid chain: Golgi reassembly-stacking protein 1 (440 aa).

G2 is lipidated: N-myristoyl glycine. 2 PDZ GRASP-type domains span residues E15 to F105 and Q111 to L199. Residues E15–G215 are GRASP. H18, H20, and C103 together coordinate Zn(2+). Positions L190–I202 are essential for interaction with GOLGA2/GM130. Disordered stretches follow at residues Q205–S248, P261–R301, and L327–E440. Over residues P214 to E239 the composition is skewed to pro residues. At T216 the chain carries Phosphothreonine. Low complexity predominate over residues L327 to T336. A compositionally biased stretch (polar residues) spans A337–S351. A phosphoserine mark is found at S362, S364, and S373.

It belongs to the GORASP family. As to quaternary structure, homodimer. Forms higher-order oligomers under interphase but not mitotic conditions. Dimers of the protein on one membrane might be able to interact with dimers on another and so stack cisternae. Interacts with the C-terminus of GOLGA2/GM130 under both mitotic and non-mitotic conditions. The interaction is critical for the correct targeting of both proteins to the cis-Golgi. Interacts with TMED2 and TMED3. In terms of processing, phosphorylated by CDC2/B1 and PLK kinases during mitosis. Phosphorylation cycle correlates with the cisternal stacking cycle. Phosphorylation of the homodimer prevents the association of dimers into higher-order oligomers, leading to cisternal unstacking. Target for caspase-3 cleavage during apoptosis. The cleavage contributes to Golgi fragmentation and occurs very early in the execution phase of apoptosis. Post-translationally, myristoylated.

The protein localises to the golgi apparatus. The protein resides in the cis-Golgi network membrane. It localises to the endoplasmic reticulum-Golgi intermediate compartment membrane. Key structural protein of the Golgi apparatus. The membrane cisternae of the Golgi apparatus adhere to each other to form stacks, which are aligned side by side to form the Golgi ribbon. Acting in concert with GORASP2/GRASP55, is required for the formation and maintenance of the Golgi ribbon, and may be dispensable for the formation of stacks. However, other studies suggest that GORASP1 plays an important role in assembly and membrane stacking of the cisternae, and in the reassembly of Golgi stacks after breakdown during mitosis. Caspase-mediated cleavage of GORASP1 is required for fragmentation of the Golgi during apoptosis. Also mediates, via its interaction with GOLGA2/GM130, the docking of transport vesicles with the Golgi membranes. Mediates ER stress-induced unconventional (ER/Golgi-independent) trafficking of core-glycosylated CFTR to cell membrane. The chain is Golgi reassembly-stacking protein 1 (GORASP1) from Homo sapiens (Human).